Consider the following 410-residue polypeptide: 3-phosphoshikimate 1-carboxyvinyltransferase (410 aa).

The 3-phosphoshikimate site is built by Lys-21, Ser-22, and Arg-26. Phosphoenolpyruvate is bound at residue Lys-21. The phosphoenolpyruvate site is built by Gly-69 and Arg-97. 6 residues coordinate 3-phosphoshikimate: Ser-143, Ser-144, Gln-145, Ser-171, Asp-288, and Lys-315. Gln-145 lines the phosphoenolpyruvate pocket. The active-site Proton acceptor is the Asp-288. Arg-319, Arg-364, and Lys-389 together coordinate phosphoenolpyruvate.

Belongs to the EPSP synthase family. Monomer.

The protein resides in the cytoplasm. The enzyme catalyses 3-phosphoshikimate + phosphoenolpyruvate = 5-O-(1-carboxyvinyl)-3-phosphoshikimate + phosphate. It participates in metabolic intermediate biosynthesis; chorismate biosynthesis; chorismate from D-erythrose 4-phosphate and phosphoenolpyruvate: step 6/7. Functionally, catalyzes the transfer of the enolpyruvyl moiety of phosphoenolpyruvate (PEP) to the 5-hydroxyl of shikimate-3-phosphate (S3P) to produce enolpyruvyl shikimate-3-phosphate and inorganic phosphate. The sequence is that of 3-phosphoshikimate 1-carboxyvinyltransferase from Bacteroides fragilis (strain YCH46).